The following is a 251-amino-acid chain: Ubiquinone/menaquinone biosynthesis C-methyltransferase UbiE (251 aa).

S-adenosyl-L-methionine-binding positions include Thr74, Asp95, and 123-124; that span reads NA.

It belongs to the class I-like SAM-binding methyltransferase superfamily. MenG/UbiE family.

It catalyses the reaction a 2-demethylmenaquinol + S-adenosyl-L-methionine = a menaquinol + S-adenosyl-L-homocysteine + H(+). It carries out the reaction a 2-methoxy-6-(all-trans-polyprenyl)benzene-1,4-diol + S-adenosyl-L-methionine = a 5-methoxy-2-methyl-3-(all-trans-polyprenyl)benzene-1,4-diol + S-adenosyl-L-homocysteine + H(+). It participates in quinol/quinone metabolism; menaquinone biosynthesis; menaquinol from 1,4-dihydroxy-2-naphthoate: step 2/2. The protein operates within cofactor biosynthesis; ubiquinone biosynthesis. In terms of biological role, methyltransferase required for the conversion of demethylmenaquinol (DMKH2) to menaquinol (MKH2) and the conversion of 2-polyprenyl-6-methoxy-1,4-benzoquinol (DDMQH2) to 2-polyprenyl-3-methyl-6-methoxy-1,4-benzoquinol (DMQH2). The chain is Ubiquinone/menaquinone biosynthesis C-methyltransferase UbiE from Pseudoalteromonas translucida (strain TAC 125).